The chain runs to 50 residues: Large ribosomal subunit protein bL33B (50 aa).

Belongs to the bacterial ribosomal protein bL33 family.

This is Large ribosomal subunit protein bL33B from Metamycoplasma arthritidis (strain 158L3-1) (Mycoplasma arthritidis).